The chain runs to 136 residues: Histone H3 (136 aa).

The segment at 1–43 (MARTKQTARKSTGGKAPRKQLATKAARKSAPASGGVKKPHRYR) is disordered. N6,N6,N6-trimethyllysine; alternate is present on residues Lys-5 and Lys-10. An N6,N6-dimethyllysine; alternate mark is found at Lys-5 and Lys-10. N6-acetyllysine; alternate is present on residues Lys-5 and Lys-10. Lys-5 is subject to N6-methyllysine; alternate. Ser-11 carries the post-translational modification Phosphoserine. An N6-acetyllysine mark is found at Lys-15 and Lys-24. Position 28 is an N6,N6,N6-trimethyllysine; alternate (Lys-28). Residue Lys-28 is modified to N6,N6-dimethyllysine; alternate. Lys-28 carries the N6-methyllysine; alternate modification. Ser-29 carries the post-translational modification Phosphoserine. An N6,N6,N6-trimethyllysine; alternate modification is found at Lys-37. Lys-37 is subject to N6,N6-dimethyllysine; alternate. The residue at position 37 (Lys-37) is an N6-methyllysine; alternate. At Lys-80 the chain carries N6-methyllysine.

This sequence belongs to the histone H3 family. As to quaternary structure, the nucleosome is a histone octamer containing two molecules each of H2A, H2B, H3 and H4 assembled in one H3-H4 heterotetramer and two H2A-H2B heterodimers. The octamer wraps approximately 147 bp of DNA. Interacts (via N-terminal tail mono-acetylated on Lys-15) with swsn-4 (via Bromo domain); the interaction is direct. Post-translationally, phosphorylated at Ser-11 and Ser-29 during M phase. Phosphorylation of Ser-11 requires air-2 but not air-1. Dephosphorylated by gsp-1 and/or gsp-2 during chromosome segregation. In terms of processing, acetylation is generally linked to gene activation. Methylation at Lys-5 is linked to gene activation and is absent from male inactive X chromosome chromatin. Methylation at Lys-10 is linked to gene repression and is enriched in male inactive X chromosome chromatin. Methylation at Lys-37 occurs on the entire length of autosomes during meiotic prophase. Trimethylation at Lys-10 and Lys-37 is specifically antagonized by jmjd-2. Dimethylation and trimethylation at Lys-28 occurs in all nuclei. The mes-2-mes-3-mes-6 complex may be responsible for Lys-28 methylation in most of the germline and in the early embryo.

The protein resides in the nucleus. It localises to the chromosome. Core component of nucleosome. Nucleosomes wrap and compact DNA into chromatin, limiting DNA accessibility to the cellular machineries which require DNA as a template. Histones thereby play a central role in transcription regulation, DNA repair, DNA replication and chromosomal stability. DNA accessibility is regulated via a complex set of post-translational modifications of histones, also called histone code, and nucleosome remodeling. This Caenorhabditis elegans protein is Histone H3 (his-2).